Consider the following 209-residue polypeptide: Histidine biosynthesis bifunctional protein HisIE (209 aa).

The segment at 1 to 116 is phosphoribosyl-AMP cyclohydrolase; it reads MKQADELRFN…EEQAADRFGI (116 aa). The phosphoribosyl-ATP pyrophosphohydrolase stretch occupies residues 117 to 209; it reads MNELERVIAE…LKKRHSEIEE (93 aa).

The protein in the N-terminal section; belongs to the PRA-CH family. In the C-terminal section; belongs to the PRA-PH family.

The protein localises to the cytoplasm. It carries out the reaction 1-(5-phospho-beta-D-ribosyl)-ATP + H2O = 1-(5-phospho-beta-D-ribosyl)-5'-AMP + diphosphate + H(+). It catalyses the reaction 1-(5-phospho-beta-D-ribosyl)-5'-AMP + H2O = 1-(5-phospho-beta-D-ribosyl)-5-[(5-phospho-beta-D-ribosylamino)methylideneamino]imidazole-4-carboxamide. It functions in the pathway amino-acid biosynthesis; L-histidine biosynthesis; L-histidine from 5-phospho-alpha-D-ribose 1-diphosphate: step 2/9. It participates in amino-acid biosynthesis; L-histidine biosynthesis; L-histidine from 5-phospho-alpha-D-ribose 1-diphosphate: step 3/9. The sequence is that of Histidine biosynthesis bifunctional protein HisIE (hisI) from Bacillus subtilis (strain 168).